The primary structure comprises 299 residues: uncharacterized protein (299 aa).

This is an uncharacterized protein from Archaeoglobus fulgidus (strain ATCC 49558 / DSM 4304 / JCM 9628 / NBRC 100126 / VC-16).